The primary structure comprises 450 residues: Protein DA1-related 3 (450 aa).

The stretch at 1–46 (MVRRKRQEEDEKIEIERVKEESLKLAKQAEEKRRLEESKEQGKRIQ) forms a coiled coil. 2 stretches are compositionally biased toward basic and acidic residues: residues 27 to 47 (KQAE…RIQV) and 56 to 69 (TSKD…SKDV). The tract at residues 27 to 87 (KQAEEKRRLE…PSIDGKSEIG (61 aa)) is disordered.

The sequence is that of Protein DA1-related 3 (DAR3) from Arabidopsis thaliana (Mouse-ear cress).